We begin with the raw amino-acid sequence, 262 residues long: Nurim (262 aa).

Topologically, residues 1-4 are nuclear; that stretch reads MAPA. A helical transmembrane segment spans residues 5-28; the sequence is LLLVPAALASFILAFGTGVEFVRF. Topologically, residues 29 to 58 are perinuclear space; sequence TSLRPLLGGIPESGGPDARHGWLAALQDRS. Residues 59–80 form a helical membrane-spanning segment; that stretch reads ILASLAWDLCLLLLFVVQHSLM. The Nuclear segment spans residues 81–97; it reads ATEAVKAWTSRYFGVLQ. The helical transmembrane segment at 98–114 threads the bilayer; sequence RSLYVACTALALQLVMR. The Perinuclear space portion of the chain corresponds to 115–133; sequence YWETTPRGPVLWEARAEPW. Residues 134–164 form a helical membrane-spanning segment; the sequence is ATWVPLLCFVLHVVSWLLIFSILLVFDYAEL. Over 165-191 the chain is Nuclear; sequence MGLKQVYYHVLGLGEPLSLKSPRALRL. Residues 192 to 210 form a helical membrane-spanning segment; sequence FSHLRHPVCVELLTVLWVV. Residues 211 to 216 are Perinuclear space-facing; that stretch reads PTLGTD. Residues 217 to 234 traverse the membrane as a helical segment; that stretch reads RLLLALLFTLYLGLAHGL. The Nuclear segment spans residues 235–262; it reads DQQDLRYLRSQLQRKLHLLSRPQDGEAE.

This sequence belongs to the nurim family.

The protein localises to the nucleus inner membrane. The polypeptide is Nurim (Nrm) (Mus musculus (Mouse)).